The sequence spans 244 residues: MADRSVRPLRHLVHAVTGGQPPSEAQVRQAAWIARCVGRGGSAPLHRDDVSALAETLQVKEFAPGAVVFHADQTADGVWIVRHGLIELAVGSRRRRAVVNILHPGDVDGDIPLLLEMPMVYTGRALTQATCLFLDRQAFERLLATHPAIARRWLSSVAQRVSTAQIRLMGMLGRPLPAQVAQLLLDEAIDARIELAQRTLAAMLGAQRPSINKILKEFERDRLITVGYAVIEITDQHGLRARAQ.

Position 41–160 (41–160 (GSAPLHRDDV…RRWLSSVAQR (120 aa))) interacts with a nucleoside 3',5'-cyclic phosphate. In terms of domain architecture, HTH crp-type spans 174 to 237 (RPLPAQVAQL…YAVIEITDQH (64 aa)). The segment at residues 197–216 (QRTLAAMLGAQRPSINKILK) is a DNA-binding region (H-T-H motif).

Its function is as follows. Positively regulates the expression of at least groEL2. In Mycobacterium tuberculosis (strain CDC 1551 / Oshkosh), this protein is HTH-type transcriptional regulator Cmr (cmr).